We begin with the raw amino-acid sequence, 46 residues long: Apamin (46 aa).

An N-terminal signal peptide occupies residues 1-27; the sequence is MISMLRCIYLFLSVILITSYFVTPVMP. Cystine bridges form between Cys-28–Cys-38 and Cys-30–Cys-42. The interval 40 to 41 is essential for toxin activity; sequence RR. At His-45 the chain carries Histidine amide.

As to expression, expressed by the venom gland.

It localises to the secreted. Its function is as follows. Toxin with unique selectivity to KCa2 channels. Potently blocks human, rat and mouse KCa2.2/KCNN2/SK2 channels (IC(50)=27-140 pM), and moderately blocks human and rat KCa2.3/KCNN3/SK3 channels (IC(50)=0.6-4 nM), and human (IC(50)=0.7-12 nM) and mouse (IC(50)=28 nM) KCa2.1/KCNN1/SK1 channels. Does not show any antimicrobial activity. In vivo, intracerebroventricular injection into rats of a dose of 1 ng results in neurodegeneration specifically in the Purkinje cells of the cerebellum, and induces seizures characterized by hypersensitivity to noise, loss of postural control, paroxystic jerking, and alternating periods of great agitation with tonic-clonic convulsions and periods of total prostration. When administered at high doses, exerts anti-inflammatory, anti-oxidative, anti-fibrotic and anti-apoptotic properties in several models of inflammatory disease, including gouty arthritis, atherosclerosis, atopic dermatitis and acute kidney injury. Down-regulates pro-inflammatory signaling pathways, such as the NF-kappaB and STAT3 pathways, probably by blocking SK channels such as KCa2.2/KCNN2/SK2 and/or KCa2.3/KCNN3/SK3 which are thought to be involved in promoting some inflammatory responses. For example in mouse and rat microglia cells, inhibits LPS-activated KCa2.2/KCNN2/SK2 channels and TLR4 expression leading to the down-regulation of the NF-kappaB, STAT, and MAPK/ERK signaling pathways and, as a consequence, decreases secretion of pro-inflammatory cytokines. The polypeptide is Apamin (Apis mellifera (Honeybee)).